The chain runs to 336 residues: N-acetyl-gamma-glutamyl-phosphate reductase (336 aa).

Residue Cys156 is part of the active site.

The protein belongs to the NAGSA dehydrogenase family. Type 1 subfamily.

Its subcellular location is the cytoplasm. The enzyme catalyses N-acetyl-L-glutamate 5-semialdehyde + phosphate + NADP(+) = N-acetyl-L-glutamyl 5-phosphate + NADPH + H(+). It participates in amino-acid biosynthesis; L-arginine biosynthesis; N(2)-acetyl-L-ornithine from L-glutamate: step 3/4. In terms of biological role, catalyzes the NADPH-dependent reduction of N-acetyl-5-glutamyl phosphate to yield N-acetyl-L-glutamate 5-semialdehyde. In Moritella abyssi, this protein is N-acetyl-gamma-glutamyl-phosphate reductase.